Reading from the N-terminus, the 118-residue chain is Large ribosomal subunit protein bL20 (118 aa).

It belongs to the bacterial ribosomal protein bL20 family.

In terms of biological role, binds directly to 23S ribosomal RNA and is necessary for the in vitro assembly process of the 50S ribosomal subunit. It is not involved in the protein synthesizing functions of that subunit. This is Large ribosomal subunit protein bL20 from Serratia proteamaculans (strain 568).